Here is a 107-residue protein sequence, read N- to C-terminus: UPF0060 membrane protein ZMO1566 (107 aa).

Helical transmembrane passes span 4 to 24 (LLYI…WAWI), 29 to 49 (SPLW…LLTF), 55 to 75 (AGKA…LWSW), and 84 to 104 (HWDL…LWMP).

It belongs to the UPF0060 family.

It is found in the cell inner membrane. The protein is UPF0060 membrane protein ZMO1566 of Zymomonas mobilis subsp. mobilis (strain ATCC 31821 / ZM4 / CP4).